The chain runs to 307 residues: Serine/threonine-protein phosphatase 4 catalytic subunit (307 aa).

The Mn(2+) site is built by D54, H56, D82, and N114. The active-site Proton donor is the H115. 2 residues coordinate Mn(2+): H164 and H238. L307 is subject to Leucine methyl ester.

This sequence belongs to the PPP phosphatase family. PP-4 (PP-X) subfamily. As to quaternary structure, serine/threonine-protein phosphatase 4 (PP4) occurs in different assemblies of the catalytic and one or more regulatory subunits. Probably part of a PP4 PPP4C-PPP4R2-PPP4R3 complex containing Pp4-19C, PPP4R2r and flfl. Interacts with Ptpa; thereby mediating basal localization of the Miranda (Mira) complex; probably by dephosphorylation of Mira. Mn(2+) serves as cofactor. Reversibly methyl esterified on Leu-307 by leucine carboxyl methyltransferase 1 (LCMT1) and protein phosphatase methylesterase 1 (PPME1). Carboxyl methylation influences the affinity of the catalytic subunit for the different regulatory subunits, thereby modulating the PP2A holoenzyme's substrate specificity, enzyme activity and cellular localization.

It localises to the cytoplasm. Its subcellular location is the nucleus. The protein resides in the cytoskeleton. The protein localises to the microtubule organizing center. It is found in the centrosome. It carries out the reaction O-phospho-L-seryl-[protein] + H2O = L-seryl-[protein] + phosphate. The enzyme catalyses O-phospho-L-threonyl-[protein] + H2O = L-threonyl-[protein] + phosphate. Its function is as follows. Protein phosphatase that regulates many processes such as microtubule organization at centrosomes. The probable PP4 complex Pp4-19C-PPP4R2r-flfl (PPP4C-PPP4R2-PPP4R3) is required to prevent caspase-induced cell death (in vitro). In Drosophila melanogaster (Fruit fly), this protein is Serine/threonine-protein phosphatase 4 catalytic subunit (Pp4-19C).